The chain runs to 162 residues: Protein cornichon homolog 2 (162 aa).

The Cytoplasmic segment spans residues 1 to 10 (MAFTFAAFCY). A helical transmembrane segment spans residues 11 to 31 (MLTLVLCASLIFFIIWHIIAF). The Lumenal portion of the chain corresponds to 32–72 (DELRTDFKNPIEQGNPSRARERVKNVERICCLLRKLVVPEY). Residues 73–93 (CIHGLFCLMFMCAAEWVTLGL) traverse the membrane as a helical segment. The Cytoplasmic portion of the chain corresponds to 94 to 138 (NIPLLFYHLWRYFHRPADGSEVMFDPVSIMNVDILNYCQKEAWCK). Residues 139–161 (LAFYLLSFFYYLYRVGATVRYVS) traverse the membrane as a helical segment. Position 162 (alanine 162) is a topological domain, lumenal.

The protein belongs to the cornichon family.

The protein resides in the membrane. Functionally, regulates the trafficking and gating properties of AMPA-selective glutamate receptors (AMPARs). This chain is Protein cornichon homolog 2 (cnih2), found in Xenopus tropicalis (Western clawed frog).